The primary structure comprises 265 residues: Hydroxyethylthiazole kinase (265 aa).

Methionine 43 is a substrate binding site. Positions 118 and 165 each coordinate ATP. Residue glycine 192 coordinates substrate.

This sequence belongs to the Thz kinase family. It depends on Mg(2+) as a cofactor.

The catalysed reaction is 5-(2-hydroxyethyl)-4-methylthiazole + ATP = 4-methyl-5-(2-phosphooxyethyl)-thiazole + ADP + H(+). The protein operates within cofactor biosynthesis; thiamine diphosphate biosynthesis; 4-methyl-5-(2-phosphoethyl)-thiazole from 5-(2-hydroxyethyl)-4-methylthiazole: step 1/1. In terms of biological role, catalyzes the phosphorylation of the hydroxyl group of 4-methyl-5-beta-hydroxyethylthiazole (THZ). This Pyrococcus abyssi (strain GE5 / Orsay) protein is Hydroxyethylthiazole kinase.